Reading from the N-terminus, the 470-residue chain is ATP synthase subunit beta (470 aa).

Residue 148–155 (GGAGVGKT) participates in ATP binding.

It belongs to the ATPase alpha/beta chains family. F-type ATPases have 2 components, CF(1) - the catalytic core - and CF(0) - the membrane proton channel. CF(1) has five subunits: alpha(3), beta(3), gamma(1), delta(1), epsilon(1). CF(0) has three main subunits: a(1), b(2) and c(9-12). The alpha and beta chains form an alternating ring which encloses part of the gamma chain. CF(1) is attached to CF(0) by a central stalk formed by the gamma and epsilon chains, while a peripheral stalk is formed by the delta and b chains.

It is found in the cell inner membrane. It carries out the reaction ATP + H2O + 4 H(+)(in) = ADP + phosphate + 5 H(+)(out). In terms of biological role, produces ATP from ADP in the presence of a proton gradient across the membrane. The catalytic sites are hosted primarily by the beta subunits. The protein is ATP synthase subunit beta of Teredinibacter turnerae (strain ATCC 39867 / T7901).